The sequence spans 154 residues: SsrA-binding protein (154 aa).

The segment at 131-154 (DKRQDLKQKEAKRDIERAFKERQQ) is disordered. Residues 132 to 154 (KRQDLKQKEAKRDIERAFKERQQ) show a composition bias toward basic and acidic residues.

This sequence belongs to the SmpB family.

Its subcellular location is the cytoplasm. Functionally, required for rescue of stalled ribosomes mediated by trans-translation. Binds to transfer-messenger RNA (tmRNA), required for stable association of tmRNA with ribosomes. tmRNA and SmpB together mimic tRNA shape, replacing the anticodon stem-loop with SmpB. tmRNA is encoded by the ssrA gene; the 2 termini fold to resemble tRNA(Ala) and it encodes a 'tag peptide', a short internal open reading frame. During trans-translation Ala-aminoacylated tmRNA acts like a tRNA, entering the A-site of stalled ribosomes, displacing the stalled mRNA. The ribosome then switches to translate the ORF on the tmRNA; the nascent peptide is terminated with the 'tag peptide' encoded by the tmRNA and targeted for degradation. The ribosome is freed to recommence translation, which seems to be the essential function of trans-translation. The chain is SsrA-binding protein from Listeria innocua serovar 6a (strain ATCC BAA-680 / CLIP 11262).